The following is a 173-amino-acid chain: Crossover junction endodeoxyribonuclease RuvC (173 aa).

Catalysis depends on residues aspartate 8, glutamate 67, and aspartate 139. Residues aspartate 8, glutamate 67, and aspartate 139 each coordinate Mg(2+).

This sequence belongs to the RuvC family. In terms of assembly, homodimer which binds Holliday junction (HJ) DNA. The HJ becomes 2-fold symmetrical on binding to RuvC with unstacked arms; it has a different conformation from HJ DNA in complex with RuvA. In the full resolvosome a probable DNA-RuvA(4)-RuvB(12)-RuvC(2) complex forms which resolves the HJ. Mg(2+) serves as cofactor.

It localises to the cytoplasm. The catalysed reaction is Endonucleolytic cleavage at a junction such as a reciprocal single-stranded crossover between two homologous DNA duplexes (Holliday junction).. In terms of biological role, the RuvA-RuvB-RuvC complex processes Holliday junction (HJ) DNA during genetic recombination and DNA repair. Endonuclease that resolves HJ intermediates. Cleaves cruciform DNA by making single-stranded nicks across the HJ at symmetrical positions within the homologous arms, yielding a 5'-phosphate and a 3'-hydroxyl group; requires a central core of homology in the junction. The consensus cleavage sequence is 5'-(A/T)TT(C/G)-3'. Cleavage occurs on the 3'-side of the TT dinucleotide at the point of strand exchange. HJ branch migration catalyzed by RuvA-RuvB allows RuvC to scan DNA until it finds its consensus sequence, where it cleaves and resolves the cruciform DNA. The protein is Crossover junction endodeoxyribonuclease RuvC of Vibrio parahaemolyticus serotype O3:K6 (strain RIMD 2210633).